The chain runs to 132 residues: Small ribosomal subunit protein uS8c (132 aa).

This sequence belongs to the universal ribosomal protein uS8 family. As to quaternary structure, part of the 30S ribosomal subunit.

The protein localises to the plastid. It is found in the chloroplast. Its function is as follows. One of the primary rRNA binding proteins, it binds directly to 16S rRNA central domain where it helps coordinate assembly of the platform of the 30S subunit. The protein is Small ribosomal subunit protein uS8c (rps8) of Phaeodactylum tricornutum (strain CCAP 1055/1).